A 114-amino-acid polypeptide reads, in one-letter code: MMKSLRVLLVILWLQLSWVWSQQKEVEQDPGPLSVPEGAIVSLNCTYSNSAFQYFMWYRQYSRKGPELLMYTYSSGNKEDGRFTAQVDKSSKYISLFIRDSQPSDSATYLCAMS.

Residues methionine 1–serine 21 form the signal peptide. The 91-residue stretch at lysine 24–serine 114 folds into the Ig-like domain. N-linked (GlcNAc...) asparagine glycosylation occurs at asparagine 44. Cysteine 45 and cysteine 111 form a disulfide bridge.

As to quaternary structure, alpha-beta TR is a heterodimer composed of an alpha and beta chain; disulfide-linked. The alpha-beta TR is associated with the transmembrane signaling CD3 coreceptor proteins to form the TR-CD3 (TcR or TCR). The assembly of alpha-beta TR heterodimers with CD3 occurs in the endoplasmic reticulum where a single alpha-beta TR heterodimer associates with one CD3D-CD3E heterodimer, one CD3G-CD3E heterodimer and one CD247 homodimer forming a stable octameric structure. CD3D-CD3E and CD3G-CD3E heterodimers preferentially associate with TR alpha and TR beta chains, respectively. The association of the CD247 homodimer is the last step of TcR assembly in the endoplasmic reticulum and is required for transport to the cell surface.

The protein resides in the cell membrane. In terms of biological role, v region of the variable domain of T cell receptor (TR) alpha chain that participates in the antigen recognition. Alpha-beta T cell receptors are antigen specific receptors which are essential to the immune response and are present on the cell surface of T lymphocytes. Recognize peptide-major histocompatibility (MH) (pMH) complexes that are displayed by antigen presenting cells (APC), a prerequisite for efficient T cell adaptive immunity against pathogens. Binding of alpha-beta TR to pMH complex initiates TR-CD3 clustering on the cell surface and intracellular activation of LCK that phosphorylates the ITAM motifs of CD3G, CD3D, CD3E and CD247 enabling the recruitment of ZAP70. In turn ZAP70 phosphorylates LAT, which recruits numerous signaling molecules to form the LAT signalosome. The LAT signalosome propagates signal branching to three major signaling pathways, the calcium, the mitogen-activated protein kinase (MAPK) kinase and the nuclear factor NF-kappa-B (NF-kB) pathways, leading to the mobilization of transcription factors that are critical for gene expression and essential for T cell growth and differentiation. The T cell repertoire is generated in the thymus, by V-(D)-J rearrangement. This repertoire is then shaped by intrathymic selection events to generate a peripheral T cell pool of self-MH restricted, non-autoaggressive T cells. Post-thymic interaction of alpha-beta TR with the pMH complexes shapes TR structural and functional avidity. The chain is T cell receptor alpha variable 12-3 from Homo sapiens (Human).